Consider the following 694-residue polypeptide: Glycine--tRNA ligase beta subunit (694 aa).

The protein belongs to the class-II aminoacyl-tRNA synthetase family. In terms of assembly, tetramer of two alpha and two beta subunits.

The protein localises to the cytoplasm. The enzyme catalyses tRNA(Gly) + glycine + ATP = glycyl-tRNA(Gly) + AMP + diphosphate. This Moorella thermoacetica (strain ATCC 39073 / JCM 9320) protein is Glycine--tRNA ligase beta subunit.